The chain runs to 268 residues: MERYEQLFKQLESRKQGAFVPFVTLGDPTPELSLKIIDALITGGADALELSIPFSDPLADGPTIQNANLRAFSSNVTPTLCFELLTKIRAKYPDIPIGLLMYANLVFHHGIDEFYRRCKDTDIDSVLVADVPMSESRPFRTAAMKHGIAPIFICPPDAEDELLREIASYGRGYTYLLSRAGVTGIERRGEKPLNHLVNKLREYHAAPPLQGFGISEPKQVKETLASGAAGAISGSAIVKIIEENLSQPEIMLKELTEFVSKMKSATQL.

Active-site proton acceptor residues include glutamate 49 and aspartate 60.

The protein belongs to the TrpA family. As to quaternary structure, tetramer of two alpha and two beta chains.

It carries out the reaction (1S,2R)-1-C-(indol-3-yl)glycerol 3-phosphate + L-serine = D-glyceraldehyde 3-phosphate + L-tryptophan + H2O. Its pathway is amino-acid biosynthesis; L-tryptophan biosynthesis; L-tryptophan from chorismate: step 5/5. Functionally, the alpha subunit is responsible for the aldol cleavage of indoleglycerol phosphate to indole and glyceraldehyde 3-phosphate. The protein is Tryptophan synthase alpha chain of Photorhabdus laumondii subsp. laumondii (strain DSM 15139 / CIP 105565 / TT01) (Photorhabdus luminescens subsp. laumondii).